The following is a 188-amino-acid chain: Movement protein (188 aa).

This sequence belongs to the tombusvirus/aureusvirus movement protein p22 family. In terms of assembly, interacts with host protein HFI22. In terms of processing, phosphorylated.

It is found in the host membrane. Transports viral genome to neighboring plant cells directly through plasmosdesmata, without any budding. The movement protein allows efficient cell to cell propagation, by bypassing the host cell wall barrier. The polypeptide is Movement protein (Capsicum annuum (Capsicum pepper)).